A 213-amino-acid chain; its full sequence is Octanoyltransferase (213 aa).

Positions glutamate 32 to proline 207 constitute a BPL/LPL catalytic domain. Substrate is bound by residues arginine 71 to histidine 78, serine 138 to glycine 140, and glycine 151 to alanine 153. Cysteine 169 functions as the Acyl-thioester intermediate in the catalytic mechanism.

The protein belongs to the LipB family.

The protein resides in the cytoplasm. It carries out the reaction octanoyl-[ACP] + L-lysyl-[protein] = N(6)-octanoyl-L-lysyl-[protein] + holo-[ACP] + H(+). The protein operates within protein modification; protein lipoylation via endogenous pathway; protein N(6)-(lipoyl)lysine from octanoyl-[acyl-carrier-protein]: step 1/2. In terms of biological role, catalyzes the transfer of endogenously produced octanoic acid from octanoyl-acyl-carrier-protein onto the lipoyl domains of lipoate-dependent enzymes. Lipoyl-ACP can also act as a substrate although octanoyl-ACP is likely to be the physiological substrate. This is Octanoyltransferase from Salmonella typhi.